Here is a 220-residue protein sequence, read N- to C-terminus: Imidazoleglycerol-phosphate dehydratase (220 aa).

Substrate is bound by residues E14, H64 to H72, H90 to E94, R116, and R138. H64, H90, H91, and E94 together coordinate Mn(2+). Residues H162, H186, H187, and E190 each contribute to the Mn(2+) site. Substrate is bound by residues H186–K194 and S214–K216.

It belongs to the imidazoleglycerol-phosphate dehydratase family. The cofactor is Mn(2+).

It carries out the reaction D-erythro-1-(imidazol-4-yl)glycerol 3-phosphate = 3-(imidazol-4-yl)-2-oxopropyl phosphate + H2O. It functions in the pathway amino-acid biosynthesis; L-histidine biosynthesis; L-histidine from 5-phospho-alpha-D-ribose 1-diphosphate: step 6/9. This chain is Imidazoleglycerol-phosphate dehydratase, found in Saccharomyces cerevisiae (strain ATCC 204508 / S288c) (Baker's yeast).